A 597-amino-acid chain; its full sequence is Serine/arginine repetitive matrix protein 3 (597 aa).

A compositionally biased stretch (polar residues) spans 1 to 31; the sequence is MSSTVNNGAASMQSTPDAANGFPQPSSSSGT. The tract at residues 1-47 is disordered; the sequence is MSSTVNNGAASMQSTPDAANGFPQPSSSSGTWPRAEEELRAAEPGLV. The CWF21 domain maps to 55 to 98; the sequence is LDHERKRRVELKCMELQEMMEEQGYSEEEIRQKVGTFRQMLMEK. Basic and acidic residues predominate over residues 99 to 109; it reads EGVLTREDRPG. The tract at residues 99–597 is disordered; the sequence is EGVLTREDRP…GPAPLPPPAA (499 aa). Composition is skewed to basic residues over residues 149–158, 168–186, 199–211, and 219–243; these read RGHRGYRTKH, PKKKKKKKGGHRRSRKKRR, LRKKKKSVKKHRR, and RRKRRHRSRSSKCKRKEKNKEKKRP. Composition is skewed to low complexity over residues 257-278 and 291-313; these read SGSSHSPSLSSHYSDSRSPSRL and SQRSSGSRSPSPSGGSGWGSPQR. Composition is skewed to gly residues over residues 315–328 and 374–383; these read GGSGQRSGAHGGRP and GRGGRAAGGA. Residues 384–412 show a composition bias toward basic residues; that stretch reads GRRRRRRRRRRRSRSSASAPRRRGRRRPR. Low complexity-rich tracts occupy residues 417-433, 466-476, and 488-507; these read RGSSRSLSRARSSSDSG, RPASTSPSPGA, and SSRSPGPHPRSWSSSRSPSK. Positions 530 to 549 are enriched in basic and acidic residues; the sequence is LSRDKDGEGRARHSEAEATR. The span at 550 to 565 shows a compositional bias: basic residues; the sequence is ARRRSRSYSPIRKRRR.

The protein belongs to the CWC21 family. As to expression, expressed in breast cancer cell lines.

Functionally, may play a role in regulating breast cancer cell invasiveness. May be involved in RYBP-mediated breast cancer progression. In Homo sapiens (Human), this protein is Serine/arginine repetitive matrix protein 3 (SRRM3).